Here is a 389-residue protein sequence, read N- to C-terminus: Putative nickel insertion protein (389 aa).

It belongs to the LarC family.

This is Putative nickel insertion protein from Desulfotalea psychrophila (strain LSv54 / DSM 12343).